We begin with the raw amino-acid sequence, 95 residues long: Small ribosomal subunit protein uS19 (95 aa).

The protein belongs to the universal ribosomal protein uS19 family.

Functionally, protein S19 forms a complex with S13 that binds strongly to the 16S ribosomal RNA. The protein is Small ribosomal subunit protein uS19 of Clostridium kluyveri (strain NBRC 12016).